The primary structure comprises 853 residues: DNA mismatch repair protein MutS (853 aa).

Gly-613 to Ser-620 is an ATP binding site.

The protein belongs to the DNA mismatch repair MutS family.

This protein is involved in the repair of mismatches in DNA. It is possible that it carries out the mismatch recognition step. This protein has a weak ATPase activity. In Vibrio vulnificus (strain YJ016), this protein is DNA mismatch repair protein MutS.